A 366-amino-acid chain; its full sequence is Ribosomal RNA large subunit methyltransferase M (366 aa).

Residues Ser188, 221–224 (CPGG), Asp240, Asp260, and Asp277 each bind S-adenosyl-L-methionine. Catalysis depends on Lys306, which acts as the Proton acceptor.

Belongs to the class I-like SAM-binding methyltransferase superfamily. RNA methyltransferase RlmE family. RlmM subfamily. Monomer.

It localises to the cytoplasm. The enzyme catalyses cytidine(2498) in 23S rRNA + S-adenosyl-L-methionine = 2'-O-methylcytidine(2498) in 23S rRNA + S-adenosyl-L-homocysteine + H(+). In terms of biological role, catalyzes the 2'-O-methylation at nucleotide C2498 in 23S rRNA. This Salmonella heidelberg (strain SL476) protein is Ribosomal RNA large subunit methyltransferase M.